Here is a 486-residue protein sequence, read N- to C-terminus: Sensor protein PhoQ (486 aa).

The Cytoplasmic segment spans residues 1 to 16 (MKKLLHLFFPLSLRVR). A helical membrane pass occupies residues 17 to 37 (FLLATAAVVLVLSLAYGMVAL). Over 38–194 (IGYSVSFDKT…LKSSYMVWSW (157 aa)) the chain is Periplasmic. The a divalent metal cation site is built by aspartate 151 and aspartate 152. Residues 195 to 215 (FIYVLSANLLLVIPLLWVAAW) traverse the membrane as a helical segment. The 52-residue stretch at 215-266 (WWSLRPIEALAKEVRELEEHNRELLNPATTRELTSLVRNLNRLLKSERERYD) folds into the HAMP domain. Residues 216-486 (WSLRPIEALA…GRQHSTPKDE (271 aa)) are Cytoplasmic-facing. The region spanning 274–480 (DLTHSLKTPL…RMEVIFGRQH (207 aa)) is the Histidine kinase domain. At histidine 277 the chain carries Phosphohistidine; by autocatalysis. Asparagine 385 contacts Mg(2+). ATP-binding positions include 385-393 (NVLDNACKY), 415-420 (DDGPGI), and 434-446 (RVDT…GVGL). Glutamine 442 is a Mg(2+) binding site.

Homodimer.

It is found in the cell inner membrane. The enzyme catalyses ATP + protein L-histidine = ADP + protein N-phospho-L-histidine.. In terms of biological role, member of the two-component regulatory system PhoP/PhoQ involved in virulence, adaptation to low Mg(2+) environments and the control of acid resistance genes. In low periplasmic Mg(2+), PhoQ functions as a membrane-associated protein kinase that undergoes autophosphorylation and subsequently transfers the phosphate to PhoP, resulting in the expression of PhoP-activated genes (PAG) and repression of PhoP-repressed genes (PRG). In high periplasmic Mg(2+), acts as a protein phosphatase that dephosphorylates phospho-PhoP, which results in the repression of PG and may lead to expression of some PRG. The chain is Sensor protein PhoQ (phoQ) from Escherichia coli O157:H7.